A 596-amino-acid chain; its full sequence is Ubiquilin-4 (596 aa).

The region spanning Ile13–Lys87 is the Ubiquitin-like domain. Glycyl lysine isopeptide (Lys-Gly) (interchain with G-Cter in SUMO2) cross-links involve residues Lys23 and Lys62. Residues Gln89–Ser148 are disordered. Composition is skewed to low complexity over residues Thr93 to Pro119 and Ser139 to Ser148. Ser139 is subject to Phosphoserine. 2 consecutive STI1 domains span residues Asn187 to Met224 and Glu225 to Met256. Residue Thr282 is modified to Phosphothreonine. The interval Gly297–Phe361 is disordered. The segment covering Ser302–Ser313 has biased composition (low complexity). Ser313 carries the post-translational modification Phosphoserine. Over residues Leu324–Ser335 the composition is skewed to pro residues. The span at Gly339–Gly349 shows a compositional bias: gly residues. Positions Gln352–Phe361 are enriched in polar residues. 2 STI1 domains span residues Asn388–Leu435 and Leu439–Leu471. Residues Val482–Gln528 form a disordered region. Residues Gly499–Pro513 show a composition bias toward polar residues. Residues Pro548 to Ser593 form the UBA domain.

As to quaternary structure, homooligomer. Binds signal sequences of proteins that are targeted to the endoplasmic reticulum. Interacts (via UBA domain) with GJA1 (not ubiquitinated) and with ubiquitin; both compete for the same binding site. Interacts (via UBA domain) with ubiquitin and with polyubiquitin chains. Interacts (via ubiquitin-like domain) with PSMD2 and PSMD4, regulatory subunits of the 26S proteasome. Interacts with ATXN1/SCA1; interaction with ATXN1 inhibits polyubiquitination of UBQLN4 and interferes with PSMD4 binding. Interacts with HERPUD1. Interacts (via ubiquitin-like domain) with UBQLN1 (via UBA domain). Interacts with UBQLN2. Interacts (via STI1 1 and 2 domains) with MAP1LC3A/B/C. Interacts with BAG6. Interacts with MRE11 (when ubiquitinated); interaction with ubiquitinated MRE11 leads to MRE11 removal from chromatin. Interacts with DESI1/POST; leading to nuclear export. Interacts with BCL2A1 and BCL2L10. Post-translationally, phosphorylated by ATM at Ser-313 in response to DNA damage, leading to localization in the nucleus and recruitment to sites of DNA damage. In terms of processing, ubiquitinated; this does not lead to proteasomal degradation. May undergo both 'Lys-48'- and 'Lys-63'-linked polyubiquitination. As to expression, detected in testis, ovary, thyroid, kidney, thymus, heart, liver, lung and spleen (at protein level). Highly expressed in heart, skeletal muscle, kidney, liver and brain. Detected at lower levels in testis, lung and spleen.

The protein localises to the nucleus. The protein resides in the cytoplasm. Its subcellular location is the chromosome. It is found in the endoplasmic reticulum. It localises to the perinuclear region. The protein localises to the cytoplasmic vesicle. The protein resides in the autophagosome. Its function is as follows. Regulator of protein degradation that mediates the proteasomal targeting of misfolded, mislocalized or accumulated proteins. Acts by binding polyubiquitin chains of target proteins via its UBA domain and by interacting with subunits of the proteasome via its ubiquitin-like domain. Key regulator of DNA repair that represses homologous recombination repair: in response to DNA damage, recruited to sites of DNA damage following phosphorylation by ATM and acts by binding and removing ubiquitinated MRE11 from damaged chromatin, leading to MRE11 degradation by the proteasome. MRE11 degradation prevents homologous recombination repair, redirecting double-strand break repair toward non-homologous end joining (NHEJ). Specifically recognizes and binds mislocalized transmembrane-containing proteins and targets them to proteasomal degradation. Collaborates with DESI1/POST in the export of ubiquitinated proteins from the nucleus to the cytoplasm. Plays a role in the regulation of the proteasomal degradation of non-ubiquitinated GJA1. Acts as an adapter protein that recruits UBQLN1 to the autophagy machinery. Mediates the association of UBQLN1 with autophagosomes and the autophagy-related protein LC3 (MAP1LC3A/B/C) and may assist in the maturation of autophagosomes to autolysosomes by mediating autophagosome-lysosome fusion. The polypeptide is Ubiquilin-4 (Mus musculus (Mouse)).